The sequence spans 202 residues: Inner membrane-spanning protein YciB (202 aa).

5 helical membrane-spanning segments follow: residues 47 to 67 (ILLATVVVIAATVAQIIWVHF), 75 to 95 (MLWVSLVLVVVFGGLTLAFQN), 101 to 121 (WKPTILYWVFAGSMIFSAFIL), 146 to 166 (LSWIGFFLFMGALNLFVAFNF), and 174 to 194 (FKLFGGMGLMLVFVLGQGMLL).

Belongs to the YciB family.

It localises to the cell inner membrane. Its function is as follows. Plays a role in cell envelope biogenesis, maintenance of cell envelope integrity and membrane homeostasis. The sequence is that of Inner membrane-spanning protein YciB from Dechloromonas aromatica (strain RCB).